Consider the following 2594-residue polypeptide: Immunoglobulin superfamily member 10 (2594 aa).

Positions 1–25 (MQKRGREVSCLLISLTAICLVVTPG) are cleaved as a signal peptide. One can recognise an LRRNT domain in the interval 29–56 (CPRRCACYVPTEVHCTFRYLTSIPDGIP). LRR repeat units follow at residues 58–79 (NVER…DFSG), 82–103 (RLEL…TFSG), 106–127 (SLQV…TLYG), 130–151 (SLTR…AFYG), 154–175 (LLRL…TFVS), and 186–207 (FIKY…MVSS). An LRRCT domain is found at 219 to 281 (NPWTCDCHLK…VPSGSFLCTK (63 aa)). Asparagine 439 carries N-linked (GlcNAc...) asparagine glycosylation. 2 Ig-like C2-type domains span residues 461-567 (PKAE…YRIT) and 571-661 (PYVE…FQVS). Cystine bridges form between cysteine 497-cysteine 551 and cysteine 595-cysteine 645. An N-linked (GlcNAc...) asparagine glycan is attached at asparagine 627. The span at 670–685 (IEHDRDIDGSGLEEPK) shows a compositional bias: basic and acidic residues. 2 disordered regions span residues 670–725 (IEHD…RDLT) and 963–1008 (VSSN…GRER). The span at 715 to 725 (IHKKNKHRDLT) shows a compositional bias: basic residues. Residues 972-984 (TTKDPGFSKRPSD) are compositionally biased toward basic and acidic residues. The span at 985–1003 (SHTTAPSLFQTPRNNSTGN) shows a compositional bias: polar residues. Residue asparagine 1044 is glycosylated (N-linked (GlcNAc...) asparagine). Disordered regions lie at residues 1228–1251 (TATK…PSTT), 1333–1364 (VRSK…GYST), and 1428–1457 (SQES…PSPP). Over residues 1333–1342 (VRSKKAKDQT) the composition is skewed to basic and acidic residues. A compositionally biased stretch (polar residues) spans 1355-1364 (TPRQISGYST). Ig-like C2-type domains follow at residues 1619-1710 (PRII…VTLS), 1715-1807 (PARI…VKIQ), 1812-1901 (PPVI…RRVV), 1912-2005 (PRIE…VRLR), 2008-2106 (PAKI…VHLT), 2112-2200 (PRIR…YKLD), 2205-2302 (PPLI…LKVL), 2308-2398 (PTFR…ILLE), 2403-2493 (PVIL…VPVT), and 2499-2592 (PRII…TYIQ). Disulfide bonds link cysteine 1641/cysteine 1694, cysteine 1738/cysteine 1791, and cysteine 1835/cysteine 1888. An LRR 11 repeat occupies 1658–1681 (SGREISRGIQKTRFHVLPNGTLSI). 4 N-linked (GlcNAc...) asparagine glycosylation sites follow: asparagine 1676, asparagine 1780, asparagine 1870, and asparagine 1933. Intrachain disulfides connect cysteine 1934/cysteine 1987, cysteine 2031/cysteine 2090, cysteine 2134/cysteine 2184, cysteine 2232/cysteine 2284, cysteine 2330/cysteine 2382, cysteine 2425/cysteine 2477, and cysteine 2521/cysteine 2576. Residue asparagine 2072 is glycosylated (N-linked (GlcNAc...) asparagine). N-linked (GlcNAc...) asparagine glycosylation occurs at asparagine 2364. At tyrosine 2574 the chain carries Phosphotyrosine.

In terms of tissue distribution, in the embryo, expressed in the nasal mesenchyme.

It localises to the secreted. Functionally, involved in the control of early migration of neurons expressing gonadotropin-releasing hormone (GNRH neurons). May be involved in the maintenance of osteochondroprogenitor cells pool. The chain is Immunoglobulin superfamily member 10 (Igsf10) from Mus musculus (Mouse).